We begin with the raw amino-acid sequence, 116 residues long: Cuticle protein AM1274 (116 aa).

Position 1 is a pyrrolidone carboxylic acid (Gln-1). A disordered region spans residues 1–22; that stretch reads QLANEPPIEIIRQESTDNGDGN. Residues 20 to 85 enclose the Chitin-binding type R&amp;R domain; the sequence is DGNFNFLFET…PVSDFIPTPH (66 aa). The O-linked (HexNAc) threonine glycan is linked to Thr-83.

As to expression, arthrodial membrane.

This is Cuticle protein AM1274 from Cancer pagurus (Rock crab).